A 138-amino-acid polypeptide reads, in one-letter code: Large ribosomal subunit protein mL54 (138 aa).

A mitochondrion-targeting transit peptide spans 1–14; sequence MATKRLFGATRTWA.

The protein belongs to the mitochondrion-specific ribosomal protein mL54 family. Component of the mitochondrial large ribosomal subunit (mt-LSU). Mature mammalian 55S mitochondrial ribosomes consist of a small (28S) and a large (39S) subunit. The 28S small subunit contains a 12S ribosomal RNA (12S mt-rRNA) and 30 different proteins. The 39S large subunit contains a 16S rRNA (16S mt-rRNA), a copy of mitochondrial valine transfer RNA (mt-tRNA(Val)), which plays an integral structural role, and 52 different proteins.

It localises to the mitochondrion. This is Large ribosomal subunit protein mL54 (MRPL54) from Homo sapiens (Human).